We begin with the raw amino-acid sequence, 184 residues long: ATP synthase subunit b, chloroplastic (184 aa).

The helical transmembrane segment at 27-49 (LATNPINLSVVLGVLIFFGKGVL) threads the bilayer.

Belongs to the ATPase B chain family. As to quaternary structure, F-type ATPases have 2 components, F(1) - the catalytic core - and F(0) - the membrane proton channel. F(1) has five subunits: alpha(3), beta(3), gamma(1), delta(1), epsilon(1). F(0) has four main subunits: a(1), b(1), b'(1) and c(10-14). The alpha and beta chains form an alternating ring which encloses part of the gamma chain. F(1) is attached to F(0) by a central stalk formed by the gamma and epsilon chains, while a peripheral stalk is formed by the delta, b and b' chains.

The protein localises to the plastid. It is found in the chloroplast thylakoid membrane. In terms of biological role, f(1)F(0) ATP synthase produces ATP from ADP in the presence of a proton or sodium gradient. F-type ATPases consist of two structural domains, F(1) containing the extramembraneous catalytic core and F(0) containing the membrane proton channel, linked together by a central stalk and a peripheral stalk. During catalysis, ATP synthesis in the catalytic domain of F(1) is coupled via a rotary mechanism of the central stalk subunits to proton translocation. Functionally, component of the F(0) channel, it forms part of the peripheral stalk, linking F(1) to F(0). The polypeptide is ATP synthase subunit b, chloroplastic (Populus alba (White poplar)).